Reading from the N-terminus, the 398-residue chain is Probable aminomethyltransferase (398 aa).

It belongs to the GcvT family. As to quaternary structure, the glycine cleavage system is composed of four proteins: P, T, L and H.

It catalyses the reaction N(6)-[(R)-S(8)-aminomethyldihydrolipoyl]-L-lysyl-[protein] + (6S)-5,6,7,8-tetrahydrofolate = N(6)-[(R)-dihydrolipoyl]-L-lysyl-[protein] + (6R)-5,10-methylene-5,6,7,8-tetrahydrofolate + NH4(+). Its function is as follows. The glycine cleavage system catalyzes the degradation of glycine. This is Probable aminomethyltransferase from Pyrococcus horikoshii (strain ATCC 700860 / DSM 12428 / JCM 9974 / NBRC 100139 / OT-3).